The sequence spans 274 residues: Probable glycerophosphodiester phosphodiesterase 1 (274 aa).

Positions 12–264 (PFVVAHRGAS…HHPGRTKAWL (253 aa)) constitute a GP-PDE domain. Histidine 17 (proton acceptor) is an active-site residue. Ca(2+) contacts are provided by glutamate 44 and aspartate 46. Histidine 59 acts as the Proton donor in catalysis. Glutamate 126 contributes to the Ca(2+) binding site.

The protein belongs to the glycerophosphoryl diester phosphodiesterase family. Ca(2+) is required as a cofactor.

The enzyme catalyses a sn-glycero-3-phosphodiester + H2O = an alcohol + sn-glycerol 3-phosphate + H(+). In terms of biological role, glycerophosphodiester phosphodiesterase hydrolyzes glycerophosphodiesters into glycerol-3-phosphate (G3P) and the corresponding alcohol. In Mycobacterium tuberculosis (strain CDC 1551 / Oshkosh), this protein is Probable glycerophosphodiester phosphodiesterase 1 (glpQ1).